A 513-amino-acid polypeptide reads, in one-letter code: MQPDPSGSGGDGNANAKAKLAPPPVTAAGGRPVSVLPHKTANVRDHYRIGKKLGQGQFGTTYLCVDKASGGEFACKSIPKRKLLCREDYEDVWREIQIMHHLSEHPNVVRIRGAYEDALFVHIVMELCAGGELFDRIVAKGHYTERAAAQLIRTIVAVVEGCHSLGVMHRDLKPENFLFASAAEDAPLKATDFGLSMFYKPGDKFSDVVGSPYYVAPEVLQKCYGPESDVWSAGVILYILLCGVPPFWAETEAGIFRQILRGKLDFESEPWPSISDSAKDLVRNMLCRDPTKRLTAHEVLCHPWIVDDAVAPDKPIDSAVLSRLKHFSAMNKLKKMALRVIAESLSEEEIGGLKELFKMIDTDDSGTITFDELKEGLKRVGSELTEHEIQALMEAADIDNSGTIDYGEFIAATLHMNKLEREENLVSAFSFFDKDGSGFITIDELSQACREFGLDDLHLEDMIKDVDQNNDGQIDYSEFTAMMRKGNAGGAGRRTMRNSLQLNLGEILNPSNS.

The interval 1–33 (MQPDPSGSGGDGNANAKAKLAPPPVTAAGGRPV) is disordered. In terms of domain architecture, Protein kinase spans 47–305 (YRIGKKLGQG…AHEVLCHPWI (259 aa)). ATP is bound by residues 53–61 (LGQGQFGTT) and Lys-76. The Proton acceptor role is filled by Asp-171. The tract at residues 311–341 (APDKPIDSAVLSRLKHFSAMNKLKKMALRVI) is autoinhibitory domain. EF-hand domains are found at residues 348 to 383 (EEIG…VGSE), 384 to 419 (LTEH…MNKL), 420 to 455 (EREE…FGLD), and 458 to 489 (HLED…GNAG). Positions 361, 363, 365, 367, 372, 397, 399, 401, 403, 408, 433, 435, 437, 444, 467, 469, 471, 473, and 478 each coordinate Ca(2+).

This sequence belongs to the protein kinase superfamily. Ser/Thr protein kinase family. CDPK subfamily. As to expression, expressed in roots.

It localises to the cytoplasm. It carries out the reaction L-seryl-[protein] + ATP = O-phospho-L-seryl-[protein] + ADP + H(+). The catalysed reaction is L-threonyl-[protein] + ATP = O-phospho-L-threonyl-[protein] + ADP + H(+). Its activity is regulated as follows. Activated by calcium. Autophosphorylation may play an important role in the regulation of the kinase activity. May play a role in signal transduction pathways that involve calcium as a second messenger. Possesses calcium-dependent protein kinase activity in vitro. This Oryza sativa subsp. japonica (Rice) protein is Calcium-dependent protein kinase 24.